Reading from the N-terminus, the 968-residue chain is MPFTLGQRWISDTESELGLGTIVAMDARTVTLLFPSTGENRLYARSDSPVTRVMFNPGDTITSHEGWQLHIDEVKEENGLLVYVGTRLDTEETNVTLREVLLDSKLVFSKPQDRLFAGQIDRMDRFALRYRARKFQSEQYRMPYSGLRGQRTNLIPHQLNIAHDVGRRHAPRVLLADEVGLGKTIEAGMILHQQLLSGAAERVLIIVPETLQHQWLVEMLRRFNLRFALFDDERYTEAQHDAYNPFETEQLVICSLDFARRNKQRLEHLCDAEWDLLVVDEAHHLVWSTDAPSREYMAIEQLAERVPGVLLLTATPEQLGMESHFARLRLLDPNRFHDFEQFVEEQKNYRPVADAVAMLLAGNKLSNDELNRLGDLIGEQDIEPLLQAANSDRDDAQAARDELVSMLMDRHGTSRVLFRNTRNGVKGFPKRELHTVKLPLPTQYQTAIKVSGIMGARKSAEDRARDMLYPEQIYQEFEGDTGTWWNFDPRVEWLMGYLTSHRSQKVLVICAKATTALQLEQVLREREGIRAAVFHEGMSIIERDRAAAWFAEEDTGAQVLLCSEIGSEGRNFQFASNLVMFDLPFNPDLLEQRIGRLDRIGQAHDIQIHVPYLEKTAQSVLVRWYHEGLDAFEHTCPTGRAIYDSAYASLINYLAAPEETDGFDDLIKSCREQHEALKAQLEQGRDRLLEIHSNGGEKAQQLAQSIEEQDDDTNLIAFAMNLFDIVGINQDDRGDNLIVLTPSDHMLVPDFPGLPEDGCTITFERDVALSREDAQFITWEHPLIRNGLDLILSGDTGSSTISLLKNKALPVGTLLVELVYVVEAQAPKQLQLNRFLPPTPVRMLLDKNGNNLAAQVEFETFNRQLSAVNRHTGSKLVNAVQQDVHAILQLGETQIEKSARALIDNARREADEKLSGELSRLEALRAVNPNIRDDELAAIDSNRQQVLESLNQAGWRLDALRLIVVTHQ.

The Helicase ATP-binding domain occupies 164-334 (DVGRRHAPRV…FARLRLLDPN (171 aa)). 177–184 (DEVGLGKT) is a binding site for ATP. A DEAH box motif is present at residues 280–283 (DEAH). A Helicase C-terminal domain is found at 490–685 (RVEWLMGYLT…ALKAQLEQGR (196 aa)).

Belongs to the SNF2/RAD54 helicase family. RapA subfamily. As to quaternary structure, interacts with the RNAP. Has a higher affinity for the core RNAP than for the holoenzyme. Its ATPase activity is stimulated by binding to RNAP.

In terms of biological role, transcription regulator that activates transcription by stimulating RNA polymerase (RNAP) recycling in case of stress conditions such as supercoiled DNA or high salt concentrations. Probably acts by releasing the RNAP, when it is trapped or immobilized on tightly supercoiled DNA. Does not activate transcription on linear DNA. Probably not involved in DNA repair. The sequence is that of RNA polymerase-associated protein RapA from Salmonella choleraesuis (strain SC-B67).